The chain runs to 165 residues: Small ribosomal subunit protein uS5 (165 aa).

The S5 DRBM domain maps to 10–73 (LKEKVVFINR…EDAKKNLVEV (64 aa)).

This sequence belongs to the universal ribosomal protein uS5 family. Part of the 30S ribosomal subunit. Contacts proteins S4 and S8.

In terms of biological role, with S4 and S12 plays an important role in translational accuracy. Located at the back of the 30S subunit body where it stabilizes the conformation of the head with respect to the body. This is Small ribosomal subunit protein uS5 from Clostridium acetobutylicum (strain ATCC 824 / DSM 792 / JCM 1419 / IAM 19013 / LMG 5710 / NBRC 13948 / NRRL B-527 / VKM B-1787 / 2291 / W).